Reading from the N-terminus, the 32-residue chain is Photosystem II reaction center protein Z (32 aa).

The chain crosses the membrane as a helical span at residues 12-32 (IGSAAWAGLVLLVGTLNYLVI).

This sequence belongs to the PsbZ family. As to quaternary structure, PSII is composed of 1 copy each of membrane proteins PsbA, PsbB, PsbC, PsbD, PsbE, PsbF, PsbH, PsbI, PsbJ, PsbK, PsbL, PsbM, PsbT, PsbY, PsbZ, Psb30/Ycf12, at least 3 peripheral proteins of the oxygen-evolving complex and a large number of cofactors. It forms dimeric complexes.

It localises to the plastid. Its subcellular location is the chloroplast thylakoid membrane. Functionally, may control the interaction of photosystem II (PSII) cores with the light-harvesting antenna, regulates electron flow through the 2 photosystem reaction centers. PSII is a light-driven water plastoquinone oxidoreductase, using light energy to abstract electrons from H(2)O, generating a proton gradient subsequently used for ATP formation. In Euglena anabaena (Euglenaria anabaena), this protein is Photosystem II reaction center protein Z.